Consider the following 273-residue polypeptide: Putative methyltransferase Cher3 (273 aa).

A CheR-type methyltransferase domain is found at 1-273; that stretch reads MTSERNTDIE…VKPQRIFRKS (273 aa). Residues Ser-76, Arg-80, Glu-114, Asp-137, 199 to 200, and 215 to 216 each bind S-adenosyl-L-methionine; these read SL and RN.

The chain is Putative methyltransferase Cher3 (cheR3) from Pseudomonas putida (strain ATCC 47054 / DSM 6125 / CFBP 8728 / NCIMB 11950 / KT2440).